We begin with the raw amino-acid sequence, 94 residues long: Ferredoxin-like protein (94 aa).

2 consecutive 4Fe-4S ferredoxin-type domains span residues 20-52 and 53-83; these read PHIR…RETN and GKVT…WEWP.

It to ferredoxins from P.putida and C.tartarivorum, ferredoxin I from A.vinelandii, ferredoxin II from D.desulfuricans.

Could be a 3Fe-4S cluster-containing protein. The polypeptide is Ferredoxin-like protein (fixX) (Azotobacter vinelandii).